We begin with the raw amino-acid sequence, 250 residues long: Triosephosphate isomerase (250 aa).

A substrate-binding site is contributed by 8 to 10 (NWK). Histidine 96 serves as the catalytic Electrophile. Glutamate 169 acts as the Proton acceptor in catalysis. Substrate is bound by residues glycine 175, serine 214, and 235–236 (GG).

This sequence belongs to the triosephosphate isomerase family. As to quaternary structure, homodimer.

The protein localises to the cytoplasm. It carries out the reaction D-glyceraldehyde 3-phosphate = dihydroxyacetone phosphate. It functions in the pathway carbohydrate biosynthesis; gluconeogenesis. Its pathway is carbohydrate degradation; glycolysis; D-glyceraldehyde 3-phosphate from glycerone phosphate: step 1/1. Involved in the gluconeogenesis. Catalyzes stereospecifically the conversion of dihydroxyacetone phosphate (DHAP) to D-glyceraldehyde-3-phosphate (G3P). The protein is Triosephosphate isomerase of Oleidesulfovibrio alaskensis (strain ATCC BAA-1058 / DSM 17464 / G20) (Desulfovibrio alaskensis).